Consider the following 914-residue polypeptide: DNA mismatch repair protein MutS (914 aa).

Residues 1-25 (MDKKNDHKNNLIPQPASSFASSQER) are disordered. Residues 11–25 (LIPQPASSFASSQER) show a composition bias toward polar residues. 662 to 669 (GPNMGGKS) provides a ligand contact to ATP.

It belongs to the DNA mismatch repair MutS family.

Functionally, this protein is involved in the repair of mismatches in DNA. It is possible that it carries out the mismatch recognition step. This protein has a weak ATPase activity. In Bartonella tribocorum (strain CIP 105476 / IBS 506), this protein is DNA mismatch repair protein MutS.